Here is a 282-residue protein sequence, read N- to C-terminus: NADPH-dependent 7-cyano-7-deazaguanine reductase (282 aa).

Position 88–90 (88–90 (IES)) interacts with substrate. An NADPH-binding site is contributed by 90-91 (SK). Residue C190 is the Thioimide intermediate of the active site. D197 serves as the catalytic Proton donor. 229-230 (HE) contributes to the substrate binding site. Residue 258 to 259 (RG) coordinates NADPH.

The protein belongs to the GTP cyclohydrolase I family. QueF type 2 subfamily. Homodimer.

The protein localises to the cytoplasm. It carries out the reaction 7-aminomethyl-7-carbaguanine + 2 NADP(+) = 7-cyano-7-deazaguanine + 2 NADPH + 3 H(+). It functions in the pathway tRNA modification; tRNA-queuosine biosynthesis. In terms of biological role, catalyzes the NADPH-dependent reduction of 7-cyano-7-deazaguanine (preQ0) to 7-aminomethyl-7-deazaguanine (preQ1). This chain is NADPH-dependent 7-cyano-7-deazaguanine reductase, found in Escherichia coli O127:H6 (strain E2348/69 / EPEC).